The sequence spans 80 residues: Trefoil factor 3 (80 aa).

An N-terminal signal peptide occupies residues 1–23; sequence MEARVLWLLVVVLVLGSSSLAVA. One can recognise a P-type domain in the interval 30–73; it reads NLCEVPPKDRVDCGYPEITSEQCVNRGCCFDSSIHGVPWCFKPL. Disulfide bonds link C32-C58, C42-C57, and C52-C69.

Monomer. Homodimer; disulfide-linked.

Its subcellular location is the secreted. The protein localises to the extracellular space. It is found in the extracellular matrix. It localises to the cytoplasm. In terms of biological role, involved in the maintenance and repair of the intestinal mucosa. Promotes the mobility of epithelial cells in healing processes (motogen). The polypeptide is Trefoil factor 3 (TFF3) (Canis lupus familiaris (Dog)).